A 394-amino-acid chain; its full sequence is Phosphoglycerate kinase (394 aa).

Residues 21–23 (DFN), R36, 59–62 (HLGR), R118, and R151 each bind substrate. Residue S183 is modified to Phosphoserine. ATP-binding residues include K201 and G292. At T299 the chain carries Phosphothreonine. Residues E323 and 350 to 353 (GGDS) contribute to the ATP site.

This sequence belongs to the phosphoglycerate kinase family. In terms of assembly, monomer.

The protein resides in the cytoplasm. The catalysed reaction is (2R)-3-phosphoglycerate + ATP = (2R)-3-phospho-glyceroyl phosphate + ADP. Its pathway is carbohydrate degradation; glycolysis; pyruvate from D-glyceraldehyde 3-phosphate: step 2/5. In Bacillus mycoides (strain KBAB4) (Bacillus weihenstephanensis), this protein is Phosphoglycerate kinase.